The primary structure comprises 452 residues: Translation initiation factor eIF2B subunit gamma (452 aa).

Methionine 1 carries the post-translational modification N-acetylmethionine. The residue at position 261 (serine 261) is a Phosphoserine.

It belongs to the eIF-2B gamma/epsilon subunits family. In terms of assembly, component of the translation initiation factor 2B (eIF2B) complex which is a heterodecamer of two sets of five different subunits: alpha, beta, gamma, delta and epsilon. Subunits alpha, beta and delta comprise a regulatory subcomplex and subunits epsilon and gamma comprise a catalytic subcomplex. Within the complex, the hexameric regulatory complex resides at the center, with the two heterodimeric catalytic subcomplexes bound on opposite sides.

The protein resides in the cytoplasm. It localises to the cytosol. Its activity is regulated as follows. Activated by the chemical integrated stress response (ISR) inhibitor ISRIB which stimulates guanine nucleotide exchange factor activity for both phosphorylated and unphosphorylated eIF2. Its function is as follows. Acts as a component of the translation initiation factor 2B (eIF2B) complex, which catalyzes the exchange of GDP for GTP on the eukaryotic initiation factor 2 (eIF2) complex gamma subunit. Its guanine nucleotide exchange factor activity is repressed when bound to eIF2 complex phosphorylated on the alpha subunit, thereby limiting the amount of methionyl-initiator methionine tRNA available to the ribosome and consequently global translation is repressed. This Bos taurus (Bovine) protein is Translation initiation factor eIF2B subunit gamma (EIF2B3).